The primary structure comprises 874 residues: Alanine--tRNA ligase (874 aa).

Residues H564, H568, C665, and H669 each coordinate Zn(2+).

It belongs to the class-II aminoacyl-tRNA synthetase family. It depends on Zn(2+) as a cofactor.

The protein localises to the cytoplasm. It catalyses the reaction tRNA(Ala) + L-alanine + ATP = L-alanyl-tRNA(Ala) + AMP + diphosphate. Catalyzes the attachment of alanine to tRNA(Ala) in a two-step reaction: alanine is first activated by ATP to form Ala-AMP and then transferred to the acceptor end of tRNA(Ala). Also edits incorrectly charged Ser-tRNA(Ala) and Gly-tRNA(Ala) via its editing domain. This chain is Alanine--tRNA ligase, found in Polaromonas naphthalenivorans (strain CJ2).